The sequence spans 256 residues: Pimeloyl-[acyl-carrier protein] methyl ester esterase (256 aa).

An AB hydrolase-1 domain is found at 15 to 242; that stretch reads HLVLLHGWGL…AAHAPFISHP (228 aa). Substrate contacts are provided by residues W22, 82–83, and 143–147; these read SL and FLALQ. S82 (nucleophile) is an active-site residue. Residues D207 and H235 contribute to the active site. Substrate is bound at residue H235.

The protein belongs to the AB hydrolase superfamily. Carboxylesterase BioH family. In terms of assembly, monomer.

The protein resides in the cytoplasm. The enzyme catalyses 6-carboxyhexanoyl-[ACP] methyl ester + H2O = 6-carboxyhexanoyl-[ACP] + methanol + H(+). It participates in cofactor biosynthesis; biotin biosynthesis. Its function is as follows. The physiological role of BioH is to remove the methyl group introduced by BioC when the pimeloyl moiety is complete. It allows to synthesize pimeloyl-ACP via the fatty acid synthetic pathway through the hydrolysis of the ester bonds of pimeloyl-ACP esters. This Salmonella newport (strain SL254) protein is Pimeloyl-[acyl-carrier protein] methyl ester esterase.